The following is a 265-amino-acid chain: Isoprenyl transferase (265 aa).

D35 is an active-site residue. D35 contributes to the Mg(2+) binding site. Substrate is bound by residues 36 to 39, W40, R48, H52, and 80 to 82; these read GNGR and STE. Residue N83 is the Proton acceptor of the active site. Substrate contacts are provided by residues W84, R86, R203, and 209–211; that span reads RIS. Residue E222 participates in Mg(2+) binding.

This sequence belongs to the UPP synthase family. As to quaternary structure, homodimer. It depends on Mg(2+) as a cofactor.

Catalyzes the condensation of isopentenyl diphosphate (IPP) with allylic pyrophosphates generating different type of terpenoids. In Prochlorococcus marinus (strain MIT 9313), this protein is Isoprenyl transferase.